Consider the following 901-residue polypeptide: Clathrin coat assembly protein AP180 (901 aa).

In terms of domain architecture, ENTH spans 14–145; that stretch reads QYSVTGSAVA…FSYRQMAFDF (132 aa). Disordered stretches follow at residues 285–326, 397–424, 497–522, and 573–606; these read LEGK…DTSP, PISDPFAPEPSPPTTTTEPASASASTTT, PETSAPVVTPTASTAPPVPATAPSPA, and AAAPKPDAAPSIDLFGTDAFSSPPRGASPVPESS. Phosphoserine occurs at positions 296, 300, and 306. Over residues 302-324 the composition is skewed to polar residues; it reads LSKSSPATTVTSPNSTPAKTIDT. Thr-310 is a glycosylation site (O-linked (GlcNAc) threonine). The residue at position 313 (Ser-313) is a Phosphoserine. Thr-317 carries the phosphothreonine modification. Composition is skewed to low complexity over residues 410 to 424 and 500 to 511; these read TTTTEPASASASTTT and SAPVVTPTASTA. Residues 512-522 show a composition bias toward pro residues; the sequence is PPVPATAPSPA. Phosphoserine occurs at positions 594, 600, 621, 627, and 761. Disordered stretches follow at residues 803–845 and 857–901; these read SAGV…GMTM and MMRP…KDFL. Residues 835–845 show a composition bias toward low complexity; that stretch reads GMPPSGTGMTM. An Asymmetric dimethylarginine; alternate modification is found at Arg-859. Position 859 is an omega-N-methylarginine; alternate (Arg-859). Over residues 870–882 the composition is skewed to polar residues; sequence TQLSPSPTPATQS. A compositionally biased stretch (basic and acidic residues) spans 887–901; it reads PAKDPLADLNIKDFL.

The protein belongs to the PICALM/SNAP91 family. In terms of assembly, binds AP2A2. Interacts with AP2B1; clathrin competes with SNAP91. In terms of processing, thr-310 can be modified by the addition of N-acetylglucosamine which can be further phosphorylated. There is no evidence for direct Thr-310 phosphorylation. In terms of tissue distribution, brain. Associated with the synapses.

Its subcellular location is the cell membrane. The protein resides in the membrane. It localises to the coated pit. In terms of biological role, adaptins are components of the adaptor complexes which link clathrin to receptors in coated vesicles. Clathrin-associated protein complexes are believed to interact with the cytoplasmic tails of membrane proteins, leading to their selection and concentration. Binding of AP180 to clathrin triskelia induces their assembly into 60-70 nm coats. This chain is Clathrin coat assembly protein AP180 (Snap91), found in Mus musculus (Mouse).